A 129-amino-acid chain; its full sequence is Glycine cleavage system H protein (129 aa).

The Lipoyl-binding domain occupies 24-106 (VFTVGISEHA…YGDGWLFKIK (83 aa)). Lys-65 carries the N6-lipoyllysine modification.

It belongs to the GcvH family. In terms of assembly, the glycine cleavage system is composed of four proteins: P, T, L and H. Requires (R)-lipoate as cofactor.

Functionally, the glycine cleavage system catalyzes the degradation of glycine. The H protein shuttles the methylamine group of glycine from the P protein to the T protein. This is Glycine cleavage system H protein from Alteromonas mediterranea (strain DSM 17117 / CIP 110805 / LMG 28347 / Deep ecotype).